Reading from the N-terminus, the 261-residue chain is Ribosome-inactivating protein PD-L3/PD-L4 (261 aa).

N-linked (GlcNAc...) asparagine; in PD-L3 glycosylation occurs at N10. 2 disulfides stabilise this stretch: C34–C258 and C84–C105. E175 is an active-site residue.

It belongs to the ribosome-inactivating protein family. Type 1 RIP subfamily.

The enzyme catalyses Endohydrolysis of the N-glycosidic bond at one specific adenosine on the 28S rRNA.. In terms of biological role, inhibits protein synthesis. Does not cleave supercoiled pBR322 dsDNA. The polypeptide is Ribosome-inactivating protein PD-L3/PD-L4 (Phytolacca dioica (Bella sombra tree)).